A 114-amino-acid chain; its full sequence is UPF0102 protein CD630_12710 (114 aa).

This sequence belongs to the UPF0102 family.

This chain is UPF0102 protein CD630_12710, found in Clostridioides difficile (strain 630) (Peptoclostridium difficile).